Reading from the N-terminus, the 234-residue chain is bZIP transcription factor 27 (234 aa).

The Nuclear localization signal motif lies at 152–159 (KKRGQDSD). Positions 163 to 213 (GDRRYKRMIKNRESAARSRARKQAYTNELELEIAHLQTENARLKIQQEQLK) constitute a bZIP domain. The tract at residues 165 to 184 (RRYKRMIKNRESAARSRARK) is basic motif. The leucine-zipper stretch occupies residues 191 to 212 (LELEIAHLQTENARLKIQQEQL). Position 231 is a phosphothreonine (T231).

This sequence belongs to the bZIP family. In terms of assembly, self-interacts. Interacts with FT and FD/BZIP14. Interacts with CPK33. Phosphorylated. Expressed on the flanks of the shoot apex.

The protein localises to the nucleus. Its function is as follows. Transcription factor required for the transition to flowering promoted by FT. In Arabidopsis thaliana (Mouse-ear cress), this protein is bZIP transcription factor 27.